Here is a 235-residue protein sequence, read N- to C-terminus: Transcriptional regulatory protein CseB (235 aa).

The region spanning 6-119 is the Response regulatory domain; sequence HVLFVEDDDV…VLVARIRAVL (114 aa). Aspartate 55 is subject to 4-aspartylphosphate. The ompR/PhoB-type DNA-binding region spans 141–235; sequence GGVLTFGELE…VRGFGYKLKA (95 aa).

Phosphorylated by CseC.

The protein localises to the cytoplasm. Its function is as follows. Member of the two-component regulatory system CseB/CseC involved in the stability of the cell envelope. CseB activates transcription of RNA polymerase sigma-E factor, in response to changes in the cell envelope. This chain is Transcriptional regulatory protein CseB (cseB), found in Streptomyces avermitilis (strain ATCC 31267 / DSM 46492 / JCM 5070 / NBRC 14893 / NCIMB 12804 / NRRL 8165 / MA-4680).